Consider the following 280-residue polypeptide: 3,2-trans-enoyl-CoA isomerase (280 aa).

Substrate-binding positions include 68–72 (SGADF) and L126. E158 serves as the catalytic Proton donor/acceptor. Positions 278-280 (HRL) match the Microbody targeting signal motif.

This sequence belongs to the enoyl-CoA hydratase/isomerase family. Homohexamer, dimer of trimers. Interacts with DCI1.

It is found in the peroxisome. It catalyses the reaction a (3Z)-enoyl-CoA = a 4-saturated (2E)-enoyl-CoA. The catalysed reaction is a (3E)-enoyl-CoA = a 4-saturated (2E)-enoyl-CoA. It functions in the pathway lipid metabolism; fatty acid beta-oxidation. Essential for the beta oxidation of unsaturated fatty acids. The chain is 3,2-trans-enoyl-CoA isomerase (ECI1) from Saccharomyces cerevisiae (strain ATCC 204508 / S288c) (Baker's yeast).